Consider the following 338-residue polypeptide: D-erythrose-4-phosphate dehydrogenase (338 aa).

12 to 13 (RI) contacts NAD(+). Residues 154-156 (SCT), Arg-200, 213-214 (TK), and Arg-236 each bind substrate. Residue Cys-155 is the Nucleophile of the active site. Residue Asn-318 participates in NAD(+) binding.

It belongs to the glyceraldehyde-3-phosphate dehydrogenase family. Epd subfamily. As to quaternary structure, homotetramer.

It is found in the cytoplasm. It catalyses the reaction D-erythrose 4-phosphate + NAD(+) + H2O = 4-phospho-D-erythronate + NADH + 2 H(+). It participates in cofactor biosynthesis; pyridoxine 5'-phosphate biosynthesis; pyridoxine 5'-phosphate from D-erythrose 4-phosphate: step 1/5. In terms of biological role, catalyzes the NAD-dependent conversion of D-erythrose 4-phosphate to 4-phosphoerythronate. The protein is D-erythrose-4-phosphate dehydrogenase of Yersinia pestis bv. Antiqua (strain Antiqua).